We begin with the raw amino-acid sequence, 449 residues long: MEFFISMSETIKYNDDDHKTLFLKTLNEQRLEGEFCDIAIVVEDVKFRAHRCVLAACSTYFKKLFKKLEVDSSSVIEIDFLRSDIFEEVLNYMYTAKISVKKEDVNLMMSSGQILGIRFLDKLCSQKRDVSSPDENNGQSKSKYCLKINRPIGDAADTQDDDVEEIGDQDDSPSDDTVEGTPPSQEDGKSPTTTLRVQEAILKELGSEEVRKVNCYGQEVESMETPESKDLGSQTPQALTFNDGMSEVKDEQTPGWTTAASDMKFEYLLYGHHREQIACQACGKTFSDEGRLRKHEKLHTADRPFVCEMCTKGFTTQAHLKEHLKIHTGYKPYSCEVCGKSFIRAPDLKKHERVHSNERPFACHMCDKAFKHKSHLKDHERRHRGEKPFVCGSCTKAFAKASDLKRHENNMHSERKQVTPSAIQSETEQLQAAAMAAEAEQQLETIACS.

One can recognise a BTB domain in the interval Cys-36–Lys-102. Lys-46 participates in a covalent cross-link: Glycyl lysine isopeptide (Lys-Gly) (interchain with G-Cter in SUMO2). The Nuclear localization signal motif lies at His-50–Lys-66. The disordered stretch occupies residues Gly-153–Thr-194. A compositionally biased stretch (acidic residues) spans Asp-157–Val-178. Glycyl lysine isopeptide (Lys-Gly) (interchain with G-Cter in SUMO2) cross-links involve residues Lys-203 and Lys-249. 5 C2H2-type zinc fingers span residues Ile-277–Pro-304, Phe-305–Pro-332, Tyr-333–Pro-360, Phe-361–Pro-388, and Phe-389–Gln-417.

Belongs to the krueppel C2H2-type zinc-finger protein family. In terms of assembly, interacts with ZBTB21.

The protein resides in the nucleus. In terms of biological role, transcriptional activator of the dopamine transporter (DAT), binding it's promoter at the consensus sequence 5'-CCTGCACAGTTCACGGA-3'. Binds to 5'-d(GCC)(n)-3' trinucleotide repeats in promoter regions and acts as a repressor of the FMR1 gene. Transcriptional repressor of MYC and thymidine kinase promoters. This is Zinc finger and BTB domain-containing protein 14 (ZBTB14) from Homo sapiens (Human).